A 221-amino-acid chain; its full sequence is Pleckstrin homology domain-containing family B member 2 (221 aa).

Residues 2-109 (AFVKSGWLLR…WKFTLQDSRT (108 aa)) form the PH domain. Lys-20 is an a 1,2-diacyl-sn-glycero-3-phospho-L-serine binding site.

In terms of tissue distribution, highly expressed in brain, retina, heart and kidney. Detected at lower levels in lung, muscle and nerve.

Its subcellular location is the recycling endosome membrane. In terms of biological role, involved in retrograde transport of recycling endosomes. This chain is Pleckstrin homology domain-containing family B member 2 (Plekhb2), found in Mus musculus (Mouse).